The primary structure comprises 272 residues: Putative phosphoenolpyruvate synthase regulatory protein (272 aa).

152 to 159 (GVSRSGKT) contributes to the ADP binding site.

This sequence belongs to the pyruvate, phosphate/water dikinase regulatory protein family. PSRP subfamily.

It catalyses the reaction [pyruvate, water dikinase] + ADP = [pyruvate, water dikinase]-phosphate + AMP + H(+). The enzyme catalyses [pyruvate, water dikinase]-phosphate + phosphate + H(+) = [pyruvate, water dikinase] + diphosphate. In terms of biological role, bifunctional serine/threonine kinase and phosphorylase involved in the regulation of the phosphoenolpyruvate synthase (PEPS) by catalyzing its phosphorylation/dephosphorylation. This is Putative phosphoenolpyruvate synthase regulatory protein from Hahella chejuensis (strain KCTC 2396).